A 475-amino-acid polypeptide reads, in one-letter code: Ribulose bisphosphate carboxylase large chain (475 aa).

The propeptide occupies 1 to 2; the sequence is MS. Pro3 bears the N-acetylproline mark. Lys14 is modified (N6,N6,N6-trimethyllysine). Residues Asn123 and Thr173 each coordinate substrate. Catalysis depends on Lys175, which acts as the Proton acceptor. Residue Lys177 participates in substrate binding. Positions 201, 203, and 204 each coordinate Mg(2+). Lys201 bears the N6-carboxylysine mark. Catalysis depends on His294, which acts as the Proton acceptor. Substrate is bound by residues Arg295, His327, and Ser379.

Belongs to the RuBisCO large chain family. Type I subfamily. In terms of assembly, heterohexadecamer of 8 large chains and 8 small chains; disulfide-linked. The disulfide link is formed within the large subunit homodimers. Mg(2+) serves as cofactor. In terms of processing, the disulfide bond which can form in the large chain dimeric partners within the hexadecamer appears to be associated with oxidative stress and protein turnover.

The protein localises to the plastid. It is found in the chloroplast. It carries out the reaction 2 (2R)-3-phosphoglycerate + 2 H(+) = D-ribulose 1,5-bisphosphate + CO2 + H2O. The catalysed reaction is D-ribulose 1,5-bisphosphate + O2 = 2-phosphoglycolate + (2R)-3-phosphoglycerate + 2 H(+). RuBisCO catalyzes two reactions: the carboxylation of D-ribulose 1,5-bisphosphate, the primary event in carbon dioxide fixation, as well as the oxidative fragmentation of the pentose substrate in the photorespiration process. Both reactions occur simultaneously and in competition at the same active site. The sequence is that of Ribulose bisphosphate carboxylase large chain from Vitis vinifera (Grape).